We begin with the raw amino-acid sequence, 141 residues long: MLHSQLPVAAPLRLLCALLLLPSVTMIPGGLSPRSVTDPDVQEAAEFAVQEYNALSANAYYYKQLRIVEAQSQVVTGAKYYLTMELMKTKCAKTTGKPKVYKEIQNCELPPKAQQEKLTCRFQVWSRPWLEKIELTKMSCN.

A signal peptide spans 1–26; sequence MLHSQLPVAAPLRLLCALLLLPSVTM. A Cystatin domain is found at 29–129; sequence GGLSPRSVTD…CRFQVWSRPW (101 aa). Residues 73 to 77 carry the Secondary area of contact motif; the sequence is QVVTG. 2 disulfide bridges follow: Cys91/Cys107 and Cys120/Cys140.

The protein belongs to the cystatin family. As to expression, expressed at a low level by the venom gland (at protein level).

It localises to the secreted. Functionally, inhibits various C1 cysteine proteases including cathepsin L, papain and cathepsin B. This protein has no toxic activity and its function in the venom is unknown. It may play a role as a housekeeping or regulatory protein. The sequence is that of Cystatin from Hoplocephalus stephensii (Stephens's banded snake).